A 327-amino-acid chain; its full sequence is Probable cytosolic iron-sulfur protein assembly protein CIAO1 homolog (327 aa).

WD repeat units follow at residues 3 to 42, 48 to 87, 92 to 131, 137 to 176, 181 to 220, 239 to 278, and 290 to 327; these read GHED…WICK, GHQR…FECN, GHEN…EYEC, SHTQ…WSCC, GHES…NQEG, YHDR…DRNQ, and AHSM…PAEE.

This sequence belongs to the WD repeat CIA1 family.

Its function is as follows. Essential component of the cytosolic iron-sulfur (Fe/S) protein assembly machinery. Required for the maturation of extramitochondrial Fe/S proteins. The sequence is that of Probable cytosolic iron-sulfur protein assembly protein CIAO1 homolog from Nematostella vectensis (Starlet sea anemone).